The sequence spans 145 residues: Alpha-amylase/trypsin inhibitor CMa (145 aa).

The first 25 residues, 1–25, serve as a signal peptide directing secretion; the sequence is MASKSSITPLLLAAVLASVFAAATA.

It belongs to the protease inhibitor I6 (cereal trypsin/alpha-amylase inhibitor) family. Heterotetramer of one CMa, one CMb and two CMd chains. Post-translationally, five disulfide bonds, which are essential for the inhibitor activity, are probably present. Endosperm.

The protein resides in the secreted. In terms of biological role, alpha-amylase/trypsin inhibitor. It could be involved in insect defense mechanisms. This chain is Alpha-amylase/trypsin inhibitor CMa (IAT1), found in Hordeum vulgare (Barley).